The sequence spans 191 residues: Adenylate kinase (191 aa).

12–17 (GSGKTT) contacts ATP. An NMP region spans residues 34–63 (STGDLLRAESAKKTERGLLIEKFTSQGELV). Residues Thr35, Arg40, 61–63 (ELV), 88–91 (GYPR), and Gln95 contribute to the AMP site. Residues 130 to 136 (GRSRGAD) form an LID region. Arg131 contributes to the ATP binding site. AMP-binding residues include Arg133 and Arg145. Position 173 (Arg173) interacts with ATP.

This sequence belongs to the adenylate kinase family. Monomer.

It is found in the cytoplasm. The catalysed reaction is AMP + ATP = 2 ADP. Its pathway is purine metabolism; AMP biosynthesis via salvage pathway; AMP from ADP: step 1/1. In terms of biological role, catalyzes the reversible transfer of the terminal phosphate group between ATP and AMP. Plays an important role in cellular energy homeostasis and in adenine nucleotide metabolism. The polypeptide is Adenylate kinase (Helicobacter pylori (strain Shi470)).